Here is a 183-residue protein sequence, read N- to C-terminus: uncharacterized protein (183 aa).

3 disordered regions span residues 1–44 (MPFY…VMTA), 68–137 (GRAG…LGLR), and 163–183 (RDDP…VWPE).

This is an uncharacterized protein from Dryophytes versicolor (chameleon treefrog).